Reading from the N-terminus, the 389-residue chain is MKAGKSERERSSRRRHRSGDALATVVVKQERLSPEPVAHRRPDAPAASPPPPAAESGSAGHRGSRARGASRSPAKKKSKSSGRRSKSPRTKRSRSPHYSTVKVKQEREDHPRRGREDRQHRELSEQEHRRARNSERDRHRGHARQRRSSDERPVSGQGRDRDSQILQAQEEERDFNNARRREHRQQNESAGAEAQEVIPRPAGNKNKEVPVKEKPSFELSGALLEDTNTFRGVVIKYSEPPEARIPKKRWRLYPFKNDEVLPVMYIHRQSAYLLGRHRRIADIPIDHPSCSKQHAVFQYRLVEYTRADGTVGRRVKPYIIDLGSGNGTFLNNKRIEPQRYYELKEKDVLKFGFSSREYVLLHESSDTSELDRKEDEDEEEEEEMVSDSS.

The segment covering 1 to 10 has biased composition (basic and acidic residues); the sequence is MKAGKSERER. The tract at residues 1 to 212 is disordered; that stretch reads MKAGKSERER…GNKNKEVPVK (212 aa). S18 is modified (phosphoserine). K28 is covalently cross-linked (Glycyl lysine isopeptide (Lys-Gly) (interchain with G-Cter in SUMO); alternate). K28 participates in a covalent cross-link: Glycyl lysine isopeptide (Lys-Gly) (interchain with G-Cter in SUMO1); alternate. K28 is covalently cross-linked (Glycyl lysine isopeptide (Lys-Gly) (interchain with G-Cter in SUMO2); alternate). Basic and acidic residues predominate over residues 28-43; that stretch reads KQERLSPEPVAHRRPD. S33 and S48 each carry phosphoserine. A compositionally biased stretch (low complexity) spans 54 to 72; it reads AESGSAGHRGSRARGASRS. Over residues 73 to 95 the composition is skewed to basic residues; it reads PAKKKSKSSGRRSKSPRTKRSRS. S95 carries the phosphoserine modification. 2 stretches are compositionally biased toward basic and acidic residues: residues 103 to 138 and 147 to 163; these read VKQE…ERDR and RSSD…DRDS. Residue K104 forms a Glycyl lysine isopeptide (Lys-Gly) (interchain with G-Cter in SUMO2) linkage. Phosphoserine is present on S149. Residues 166–197 adopt a coiled-coil conformation; it reads LQAQEEERDFNNARRREHRQQNESAGAEAQEV. A Glycyl lysine isopeptide (Lys-Gly) (interchain with G-Cter in SUMO2) cross-link involves residue K214. Residues 272–335 form the FHA domain; that stretch reads YLLGRHRRIA…NGTFLNNKRI (64 aa). A compositionally biased stretch (basic and acidic residues) spans 363-373; the sequence is ESSDTSELDRK. Residues 363 to 389 form a disordered region; the sequence is ESSDTSELDRKEDEDEEEEEEMVSDSS. The segment covering 374-389 has biased composition (acidic residues); sequence EDEDEEEEEEMVSDSS. At S386 the chain carries Phosphoserine.

Component of activated spliceosome complexes. Component of the minor spliceosome, which splices U12-type introns. Binds SMAD4 and CREBBP/EP300. Binds the SMAD1/OAZ1/PSMB4 complex. Interacts with DROSHA and SMARCA4. Component of the SNARP complex which consists at least of SNIP1, SNW1, THRAP3, BCLAF1 and PNN. Post-translationally, degraded by the proteasome upon binding to the SMAD1/OAZ1/PSMB4 complex.

Its subcellular location is the nucleus. In terms of biological role, required for pre-mRNA splicing as component of the spliceosome. As a component of the minor spliceosome, involved in the splicing of U12-type introns in pre-mRNAs. Down-regulates NF-kappa-B signaling by competing with RELA for CREBBP/EP300 binding. Involved in the microRNA (miRNA) biogenesis. May be involved in cyclin-D1/CCND1 mRNA stability through the SNARP complex which associates with both the 3'end of the CCND1 gene and its mRNA. This chain is Smad nuclear interacting protein 1 (Snip1), found in Rattus norvegicus (Rat).